A 2164-amino-acid polypeptide reads, in one-letter code: Hemagglutinin A (2164 aa).

Residues 1 to 25 form the signal peptide; that stretch reads MRKLNSLFSLAVLLSLLCWGQTAAA. Peptidase C25-like regions lie at residues 26–539, 540–991, and 992–1443; these read QGGP…TPPP, GGSS…TPPP, and GGTS…TPPP. 2 disordered regions span residues 493–512 and 520–541; these read WDAPNGTPNPNPGTTTLSES and SWKTIDADGDGNNWTTTPPPGG. Low complexity predominate over residues 496 to 508; the sequence is PNGTPNPNPGTTT.

It belongs to the peptidase C25 family.

Its function is as follows. Agglutinates erythrocytes. The protein is Hemagglutinin A (hagA) of Porphyromonas gingivalis (strain ATCC BAA-308 / W83).